The following is a 230-amino-acid chain: Uracil-DNA glycosylase (230 aa).

Aspartate 71 functions as the Proton acceptor in the catalytic mechanism.

The protein belongs to the uracil-DNA glycosylase (UDG) superfamily. UNG family.

It localises to the cytoplasm. The enzyme catalyses Hydrolyzes single-stranded DNA or mismatched double-stranded DNA and polynucleotides, releasing free uracil.. In terms of biological role, excises uracil residues from the DNA which can arise as a result of misincorporation of dUMP residues by DNA polymerase or due to deamination of cytosine. This is Uracil-DNA glycosylase from Nocardioides sp. (strain ATCC BAA-499 / JS614).